The primary structure comprises 125 residues: UPF0231 protein HD_1708 (125 aa).

Belongs to the UPF0231 family.

The polypeptide is UPF0231 protein HD_1708 (Haemophilus ducreyi (strain 35000HP / ATCC 700724)).